Reading from the N-terminus, the 570-residue chain is Proline--tRNA ligase (570 aa).

It belongs to the class-II aminoacyl-tRNA synthetase family. ProS type 1 subfamily. In terms of assembly, homodimer.

The protein localises to the cytoplasm. The enzyme catalyses tRNA(Pro) + L-proline + ATP = L-prolyl-tRNA(Pro) + AMP + diphosphate. Functionally, catalyzes the attachment of proline to tRNA(Pro) in a two-step reaction: proline is first activated by ATP to form Pro-AMP and then transferred to the acceptor end of tRNA(Pro). As ProRS can inadvertently accommodate and process non-cognate amino acids such as alanine and cysteine, to avoid such errors it has two additional distinct editing activities against alanine. One activity is designated as 'pretransfer' editing and involves the tRNA(Pro)-independent hydrolysis of activated Ala-AMP. The other activity is designated 'posttransfer' editing and involves deacylation of mischarged Ala-tRNA(Pro). The misacylated Cys-tRNA(Pro) is not edited by ProRS. This Clostridium beijerinckii (strain ATCC 51743 / NCIMB 8052) (Clostridium acetobutylicum) protein is Proline--tRNA ligase.